Here is a 138-residue protein sequence, read N- to C-terminus: Large ribosomal subunit protein uL16 (138 aa).

It belongs to the universal ribosomal protein uL16 family. Part of the 50S ribosomal subunit.

In terms of biological role, binds 23S rRNA and is also seen to make contacts with the A and possibly P site tRNAs. The protein is Large ribosomal subunit protein uL16 of Anaeromyxobacter dehalogenans (strain 2CP-1 / ATCC BAA-258).